The following is a 149-amino-acid chain: Large ribosomal subunit protein bL9 (149 aa).

The protein belongs to the bacterial ribosomal protein bL9 family.

Functionally, binds to the 23S rRNA. The polypeptide is Large ribosomal subunit protein bL9 (Pasteurella multocida (strain Pm70)).